The chain runs to 211 residues: Dual specificity protein phosphatase 26 (211 aa).

Residues 60 to 207 enclose the Tyrosine-protein phosphatase domain; sequence NHADEVWPGL…LLALDRRLRQ (148 aa). Cys152 (phosphocysteine intermediate) is an active-site residue.

Belongs to the protein-tyrosine phosphatase family. Non-receptor class dual specificity subfamily. As to quaternary structure, interacts with HSF4. Brain and skeletal muscle. In the brain it is expressed ubiquitously except in the hippocampus.

It is found in the cytoplasm. It localises to the nucleus. The protein resides in the golgi apparatus. The enzyme catalyses O-phospho-L-tyrosyl-[protein] + H2O = L-tyrosyl-[protein] + phosphate. It carries out the reaction O-phospho-L-seryl-[protein] + H2O = L-seryl-[protein] + phosphate. It catalyses the reaction O-phospho-L-threonyl-[protein] + H2O = L-threonyl-[protein] + phosphate. Inactivates MAPK1 and MAPK3 which leads to dephosphorylation of heat shock factor protein 4 and a reduction in its DNA-binding activity. In Mus musculus (Mouse), this protein is Dual specificity protein phosphatase 26 (Dusp26).